The sequence spans 394 residues: Cysteine desulfurase IscS (394 aa).

Pyridoxal 5'-phosphate contacts are provided by residues 72–73, Asn-152, Gln-180, and 200–202; these read GT and SAH. Lys-203 is subject to N6-(pyridoxal phosphate)lysine. Residue Thr-238 participates in pyridoxal 5'-phosphate binding. Cys-326 serves as the catalytic Cysteine persulfide intermediate. A [2Fe-2S] cluster-binding site is contributed by Cys-326.

The protein belongs to the class-V pyridoxal-phosphate-dependent aminotransferase family. NifS/IscS subfamily. As to quaternary structure, homodimer. Forms a heterotetramer with IscU, interacts with other sulfur acceptors. The cofactor is pyridoxal 5'-phosphate.

It is found in the cytoplasm. The catalysed reaction is (sulfur carrier)-H + L-cysteine = (sulfur carrier)-SH + L-alanine. It participates in cofactor biosynthesis; iron-sulfur cluster biosynthesis. In terms of biological role, master enzyme that delivers sulfur to a number of partners involved in Fe-S cluster assembly, tRNA modification or cofactor biosynthesis. Catalyzes the removal of elemental sulfur atoms from cysteine to produce alanine. Functions as a sulfur delivery protein for Fe-S cluster synthesis onto IscU, an Fe-S scaffold assembly protein, as well as other S acceptor proteins. In Dictyoglomus turgidum (strain DSM 6724 / Z-1310), this protein is Cysteine desulfurase IscS.